Here is a 219-residue protein sequence, read N- to C-terminus: Phosphate-specific transport system accessory protein PhoU homolog (219 aa).

This sequence belongs to the PhoU family. As to quaternary structure, homodimer.

Its subcellular location is the cytoplasm. Its function is as follows. Plays a role in the regulation of phosphate uptake. Encoded together with proteins of the phosphate-specific transport (Pst) system in the polycistronic pstSCAB-phoU operon. In Clostridium acetobutylicum (strain ATCC 824 / DSM 792 / JCM 1419 / IAM 19013 / LMG 5710 / NBRC 13948 / NRRL B-527 / VKM B-1787 / 2291 / W), this protein is Phosphate-specific transport system accessory protein PhoU homolog.